The primary structure comprises 201 residues: Peptidyl-tRNA hydrolase (201 aa).

TRNA is bound at residue tyrosine 15. Histidine 20 acts as the Proton acceptor in catalysis. Residues tyrosine 66, asparagine 68, and asparagine 114 each contribute to the tRNA site.

It belongs to the PTH family. In terms of assembly, monomer.

It localises to the cytoplasm. The catalysed reaction is an N-acyl-L-alpha-aminoacyl-tRNA + H2O = an N-acyl-L-amino acid + a tRNA + H(+). Its function is as follows. Hydrolyzes ribosome-free peptidyl-tRNAs (with 1 or more amino acids incorporated), which drop off the ribosome during protein synthesis, or as a result of ribosome stalling. Functionally, catalyzes the release of premature peptidyl moieties from peptidyl-tRNA molecules trapped in stalled 50S ribosomal subunits, and thus maintains levels of free tRNAs and 50S ribosomes. The chain is Peptidyl-tRNA hydrolase from Burkholderia thailandensis (strain ATCC 700388 / DSM 13276 / CCUG 48851 / CIP 106301 / E264).